Here is a 160-residue protein sequence, read N- to C-terminus: Large ribosomal subunit protein bL19 (160 aa).

This sequence belongs to the bacterial ribosomal protein bL19 family.

In terms of biological role, this protein is located at the 30S-50S ribosomal subunit interface and may play a role in the structure and function of the aminoacyl-tRNA binding site. The sequence is that of Large ribosomal subunit protein bL19 from Prochlorococcus marinus subsp. pastoris (strain CCMP1986 / NIES-2087 / MED4).